The following is a 332-amino-acid chain: tRNA-dihydrouridine(20/20a) synthase (332 aa).

Residues 22–24 (PMM) and Gln75 contribute to the FMN site. Residue Cys105 is the Proton donor of the active site. FMN-binding positions include Lys144, His177, 217 to 219 (NGG), and 239 to 240 (GR).

Belongs to the Dus family. DusA subfamily. The cofactor is FMN.

It carries out the reaction 5,6-dihydrouridine(20) in tRNA + NADP(+) = uridine(20) in tRNA + NADPH + H(+). The catalysed reaction is 5,6-dihydrouridine(20) in tRNA + NAD(+) = uridine(20) in tRNA + NADH + H(+). The enzyme catalyses 5,6-dihydrouridine(20a) in tRNA + NADP(+) = uridine(20a) in tRNA + NADPH + H(+). It catalyses the reaction 5,6-dihydrouridine(20a) in tRNA + NAD(+) = uridine(20a) in tRNA + NADH + H(+). In terms of biological role, catalyzes the synthesis of 5,6-dihydrouridine (D), a modified base found in the D-loop of most tRNAs, via the reduction of the C5-C6 double bond in target uridines. Specifically modifies U20 and U20a in tRNAs. In Xylella fastidiosa (strain Temecula1 / ATCC 700964), this protein is tRNA-dihydrouridine(20/20a) synthase.